Here is a 244-residue protein sequence, read N- to C-terminus: uncharacterized protein (244 aa).

4 consecutive transmembrane segments (helical) span residues 20–42 (TITA…VVLI), 49–67 (FVYI…ATKV), 82–101 (TPSI…ASVF), and 108–125 (AFLV…ATPI).

The protein localises to the cell membrane. This is an uncharacterized protein from Archaeoglobus fulgidus (strain ATCC 49558 / DSM 4304 / JCM 9628 / NBRC 100126 / VC-16).